Reading from the N-terminus, the 323-residue chain is Beta-ketoacyl-[acyl-carrier-protein] synthase III (323 aa).

Active-site residues include cysteine 114 and histidine 250. The ACP-binding stretch occupies residues 251–255 (QANLR). The active site involves asparagine 280.

The protein belongs to the thiolase-like superfamily. FabH family. As to quaternary structure, homodimer.

The protein localises to the cytoplasm. The catalysed reaction is malonyl-[ACP] + acetyl-CoA + H(+) = 3-oxobutanoyl-[ACP] + CO2 + CoA. The protein operates within lipid metabolism; fatty acid biosynthesis. Catalyzes the condensation reaction of fatty acid synthesis by the addition to an acyl acceptor of two carbons from malonyl-ACP. Catalyzes the first condensation reaction which initiates fatty acid synthesis and may therefore play a role in governing the total rate of fatty acid production. Possesses both acetoacetyl-ACP synthase and acetyl transacylase activities. Its substrate specificity determines the biosynthesis of branched-chain and/or straight-chain of fatty acids. The protein is Beta-ketoacyl-[acyl-carrier-protein] synthase III of Cereibacter sphaeroides (strain ATCC 17025 / ATH 2.4.3) (Rhodobacter sphaeroides).